The following is a 177-amino-acid chain: Protein TERMINAL FLOWER 1 (177 aa).

This sequence belongs to the phosphatidylethanolamine-binding protein family. As to expression, expressed below the apical dome of inflorescence and coflorescence meristems, and in inflorescence stem.

It is found in the cytoplasm. Functionally, controls inflorescence meristem identity and is required for maintenance of an indeterminate inflorescence. Prevents the expression of 'APETALA1' and 'LEAFY'. Also plays a role in the regulation of the time of flowering in the long-day flowering pathway. May form complexes with phosphorylated ligands by interfering with kinases and their effectors. This Arabidopsis thaliana (Mouse-ear cress) protein is Protein TERMINAL FLOWER 1 (TFL1).